A 192-amino-acid chain; its full sequence is Pyridoxal 5'-phosphate synthase subunit PdxT (192 aa).

46 to 48 (GES) is an L-glutamine binding site. The Nucleophile role is filled by cysteine 75. L-glutamine-binding positions include arginine 101 and 129–130 (IR). Catalysis depends on charge relay system residues histidine 166 and glutamate 168.

The protein belongs to the glutaminase PdxT/SNO family. In terms of assembly, in the presence of PdxS, forms a dodecamer of heterodimers. Only shows activity in the heterodimer.

It carries out the reaction aldehydo-D-ribose 5-phosphate + D-glyceraldehyde 3-phosphate + L-glutamine = pyridoxal 5'-phosphate + L-glutamate + phosphate + 3 H2O + H(+). It catalyses the reaction L-glutamine + H2O = L-glutamate + NH4(+). It participates in cofactor biosynthesis; pyridoxal 5'-phosphate biosynthesis. In terms of biological role, catalyzes the hydrolysis of glutamine to glutamate and ammonia as part of the biosynthesis of pyridoxal 5'-phosphate. The resulting ammonia molecule is channeled to the active site of PdxS. The protein is Pyridoxal 5'-phosphate synthase subunit PdxT of Staphylococcus carnosus (strain TM300).